The sequence spans 367 residues: UDP-N-acetylglucosamine--N-acetylmuramyl-(pentapeptide) pyrophosphoryl-undecaprenol N-acetylglucosamine transferase (367 aa).

UDP-N-acetyl-alpha-D-glucosamine contacts are provided by residues 21 to 23 (TGG), N129, R170, S198, and Q295.

This sequence belongs to the glycosyltransferase 28 family. MurG subfamily.

The protein resides in the cell inner membrane. It catalyses the reaction di-trans,octa-cis-undecaprenyl diphospho-N-acetyl-alpha-D-muramoyl-L-alanyl-D-glutamyl-meso-2,6-diaminopimeloyl-D-alanyl-D-alanine + UDP-N-acetyl-alpha-D-glucosamine = di-trans,octa-cis-undecaprenyl diphospho-[N-acetyl-alpha-D-glucosaminyl-(1-&gt;4)]-N-acetyl-alpha-D-muramoyl-L-alanyl-D-glutamyl-meso-2,6-diaminopimeloyl-D-alanyl-D-alanine + UDP + H(+). It participates in cell wall biogenesis; peptidoglycan biosynthesis. Functionally, cell wall formation. Catalyzes the transfer of a GlcNAc subunit on undecaprenyl-pyrophosphoryl-MurNAc-pentapeptide (lipid intermediate I) to form undecaprenyl-pyrophosphoryl-MurNAc-(pentapeptide)GlcNAc (lipid intermediate II). In Synechococcus sp. (strain JA-2-3B'a(2-13)) (Cyanobacteria bacterium Yellowstone B-Prime), this protein is UDP-N-acetylglucosamine--N-acetylmuramyl-(pentapeptide) pyrophosphoryl-undecaprenol N-acetylglucosamine transferase.